The sequence spans 78 residues: DNA import protein CedA1 (78 aa).

2 helical membrane passes run 12-32 (STVT…GWAL) and 53-73 (AIIA…ISYI).

In terms of assembly, forms a complex composed of CedA, CedA1 and CedA2.

It localises to the cell membrane. In terms of biological role, part of the Ced system, which is involved in DNA import. The polypeptide is DNA import protein CedA1 (Sulfolobus acidocaldarius (strain ATCC 33909 / DSM 639 / JCM 8929 / NBRC 15157 / NCIMB 11770)).